The following is a 331-amino-acid chain: Phenylalanine--tRNA ligase alpha subunit (331 aa).

Residue Glu-252 participates in Mg(2+) binding.

This sequence belongs to the class-II aminoacyl-tRNA synthetase family. Phe-tRNA synthetase alpha subunit type 1 subfamily. Tetramer of two alpha and two beta subunits. Requires Mg(2+) as cofactor.

Its subcellular location is the cytoplasm. The enzyme catalyses tRNA(Phe) + L-phenylalanine + ATP = L-phenylalanyl-tRNA(Phe) + AMP + diphosphate + H(+). The polypeptide is Phenylalanine--tRNA ligase alpha subunit (Marinomonas sp. (strain MWYL1)).